Reading from the N-terminus, the 1571-residue chain is Pentafunctional AROM polypeptide (1571 aa).

The interval 1–384 is 3-dehydroquinate synthase; the sequence is MEQPTTIQIL…HEQKASVVSN (384 aa). Residues 44 to 46, 81 to 84, 114 to 116, and D119 contribute to the NAD(+) site; these read DTN, ESSK, and GGV. Residue R130 coordinates 7-phospho-2-dehydro-3-deoxy-D-arabino-heptonate. 139–140 contributes to the NAD(+) binding site; that stretch reads TT. Residues D146 and K152 each contribute to the 7-phospho-2-dehydro-3-deoxy-D-arabino-heptonate site. K161 contributes to the NAD(+) binding site. 7-phospho-2-dehydro-3-deoxy-D-arabino-heptonate is bound at residue N162. NAD(+)-binding positions include 179-182 and N190; that span reads FLNT. Residue E194 coordinates Zn(2+). 7-phospho-2-dehydro-3-deoxy-D-arabino-heptonate-binding positions include 194 to 197 and K250; that span reads EVIK. E260 (proton acceptor; for 3-dehydroquinate synthase activity) is an active-site residue. 7-phospho-2-dehydro-3-deoxy-D-arabino-heptonate-binding positions include 264–268 and H271; that span reads RNLLN. H271 is a Zn(2+) binding site. Catalysis depends on H275, which acts as the Proton acceptor; for 3-dehydroquinate synthase activity. Positions 287 and 356 each coordinate 7-phospho-2-dehydro-3-deoxy-D-arabino-heptonate. Position 287 (H287) interacts with Zn(2+). Positions 397–843 are EPSP synthase; sequence VLPGIPKPLN…WDALAQTFKV (447 aa). The active-site For EPSP synthase activity is the C825. The interval 866-1057 is shikimate kinase; the sequence is ASIFIIGMRG…KKKDHSFFVS (192 aa). 872 to 879 is a binding site for ATP; that stretch reads GMRGAGKT. Residues 1058–1278 are 3-dehydroquinase; it reads LTLPDLQLSA…AAPGQVSAKD (221 aa). The Proton acceptor; for 3-dehydroquinate dehydratase activity role is filled by H1181. K1209 functions as the Schiff-base intermediate with substrate; for 3-dehydroquinate dehydratase activity in the catalytic mechanism. A shikimate dehydrogenase region spans residues 1291–1571; the sequence is AKKFALFGKP…EDARAAVMNI (281 aa).

It in the N-terminal section; belongs to the sugar phosphate cyclases superfamily. Dehydroquinate synthase family. In the 2nd section; belongs to the EPSP synthase family. This sequence in the 3rd section; belongs to the shikimate kinase family. The protein in the 4th section; belongs to the type-I 3-dehydroquinase family. It in the C-terminal section; belongs to the shikimate dehydrogenase family. As to quaternary structure, homodimer. It depends on Zn(2+) as a cofactor.

The protein resides in the cytoplasm. It catalyses the reaction 7-phospho-2-dehydro-3-deoxy-D-arabino-heptonate = 3-dehydroquinate + phosphate. The catalysed reaction is 3-dehydroquinate = 3-dehydroshikimate + H2O. The enzyme catalyses shikimate + NADP(+) = 3-dehydroshikimate + NADPH + H(+). It carries out the reaction shikimate + ATP = 3-phosphoshikimate + ADP + H(+). It catalyses the reaction 3-phosphoshikimate + phosphoenolpyruvate = 5-O-(1-carboxyvinyl)-3-phosphoshikimate + phosphate. Its pathway is metabolic intermediate biosynthesis; chorismate biosynthesis; chorismate from D-erythrose 4-phosphate and phosphoenolpyruvate: step 2/7. The protein operates within metabolic intermediate biosynthesis; chorismate biosynthesis; chorismate from D-erythrose 4-phosphate and phosphoenolpyruvate: step 3/7. It participates in metabolic intermediate biosynthesis; chorismate biosynthesis; chorismate from D-erythrose 4-phosphate and phosphoenolpyruvate: step 4/7. It functions in the pathway metabolic intermediate biosynthesis; chorismate biosynthesis; chorismate from D-erythrose 4-phosphate and phosphoenolpyruvate: step 5/7. Its pathway is metabolic intermediate biosynthesis; chorismate biosynthesis; chorismate from D-erythrose 4-phosphate and phosphoenolpyruvate: step 6/7. In terms of biological role, the AROM polypeptide catalyzes 5 consecutive enzymatic reactions in prechorismate polyaromatic amino acid biosynthesis. This chain is Pentafunctional AROM polypeptide, found in Arthroderma otae (strain ATCC MYA-4605 / CBS 113480) (Microsporum canis).